The chain runs to 96 residues: Exodeoxyribonuclease 7 small subunit (96 aa).

Positions 61 to 79 (ALTKDESQKTNKTGFRTES) are enriched in basic and acidic residues. Positions 61–96 (ALTKDESQKTNKTGFRTESKSTSQTSSDSVLEEDLF) are disordered. A compositionally biased stretch (low complexity) spans 80–89 (KSTSQTSSDS).

Belongs to the XseB family. Heterooligomer composed of large and small subunits.

It localises to the cytoplasm. It catalyses the reaction Exonucleolytic cleavage in either 5'- to 3'- or 3'- to 5'-direction to yield nucleoside 5'-phosphates.. Functionally, bidirectionally degrades single-stranded DNA into large acid-insoluble oligonucleotides, which are then degraded further into small acid-soluble oligonucleotides. This chain is Exodeoxyribonuclease 7 small subunit, found in Leptospira borgpetersenii serovar Hardjo-bovis (strain JB197).